The chain runs to 537 residues: Biotin carboxylase, chloroplastic (537 aa).

A chloroplast-targeting transit peptide spans 1–71 (MDASMITNSK…ATSGGLGVTC (71 aa)). ATP is bound by residues K188, K230, 236–237 (GG), 272–275 (EKFV), and H280. The ATP-grasp domain maps to 192–389 (RETMKNAGVP…LIEEQIRVAM (198 aa)). K309 is a hydrogencarbonate binding site. The ATP site is built by E347 and E360. E347, E360, and N362 together coordinate Mg(2+). Positions 347, 360, and 362 each coordinate Mn(2+). Residues R364, V367, and R410 each coordinate hydrogencarbonate. Residue R364 is part of the active site. Residue R410 participates in biotin binding.

In terms of assembly, acetyl-CoA carboxylase is a heterohexamer composed of biotin carboxyl carrier protein, biotin carboxylase and two subunits each of ACCase subunit alpha and ACCase plastid-coded subunit beta (accD). Mg(2+) serves as cofactor. Mn(2+) is required as a cofactor. Accumulates in fatty acids synthesizing tissues. Mostly expressed in siliques, developing leaves, and flowers, present in roots and embryos (especially at torpedo stage), and, to a lower extent, in mature leaves.

It localises to the plastid. Its subcellular location is the chloroplast. The enzyme catalyses N(6)-biotinyl-L-lysyl-[protein] + hydrogencarbonate + ATP = N(6)-carboxybiotinyl-L-lysyl-[protein] + ADP + phosphate + H(+). It participates in lipid metabolism; malonyl-CoA biosynthesis; malonyl-CoA from acetyl-CoA: step 1/1. Functionally, this protein is a component of the acetyl coenzyme A carboxylase complex; first, biotin carboxylase catalyzes the carboxylation of the carrier protein and then the transcarboxylase transfers the carboxyl group to form malonyl-CoA. This chain is Biotin carboxylase, chloroplastic (CAC2), found in Arabidopsis thaliana (Mouse-ear cress).